The primary structure comprises 274 residues: Peroxiredoxin-4 (274 aa).

Positions 1-40 (MEAPPPPPPLPATTLAPGRSRKLLLLPLLLFLLRAEAVRG) are cleaved as a signal peptide. The Thioredoxin domain maps to 82 to 240 (AKISKPAPYW…TLRLVQAFQY (159 aa)). Catalysis depends on cysteine 127, which acts as the Cysteine sulfenic acid (-SOH) intermediate.

This sequence belongs to the peroxiredoxin family. AhpC/Prx1 subfamily. Homodimer; disulfide-linked, upon oxidation. 5 homodimers assemble to form a ring-like decamer. Post-translationally, the enzyme can be inactivated by further oxidation of the cysteine sulfenic acid (C(P)-SOH) to sulphinic acid (C(P)-SO2H) and sulphonic acid (C(P)-SO3H) instead of its condensation to a disulfide bond.

The protein resides in the cytoplasm. It is found in the endoplasmic reticulum. The catalysed reaction is a hydroperoxide + [thioredoxin]-dithiol = an alcohol + [thioredoxin]-disulfide + H2O. Thiol-specific peroxidase that catalyzes the reduction of hydrogen peroxide and organic hydroperoxides to water and alcohols, respectively. Plays a role in cell protection against oxidative stress by detoxifying peroxides and as sensor of hydrogen peroxide-mediated signaling events. Regulates the activation of NF-kappa-B in the cytosol by a modulation of I-kappa-B-alpha phosphorylation. The polypeptide is Peroxiredoxin-4 (PRDX4) (Bos taurus (Bovine)).